A 213-amino-acid polypeptide reads, in one-letter code: MKPRACVVVYPGSNCDRDAYHALEINGFEPSYVGLDDKLDDYELIILPGGFSYGDYLRPGAVAAREKIAFEIAKAAERGKLIMGICNGFQILIEMGLLKGALLQNSSGKFICKWVDLIVENNDTPFTNAFEKGEKIRIPIAHGFGRYVKIDDVNVVLRYVKDVNGSDERIAGVLNESGNVFGLMPHPERAVEELIGGEDGKKVFQSILNYLKR.

The Glutamine amidotransferase type-1 domain maps to 5 to 213 (ACVVVYPGSN…FQSILNYLKR (209 aa)). Cys86 serves as the catalytic Nucleophile. Catalysis depends on residues His186 and Glu188.

Part of the FGAM synthase complex composed of 1 PurL, 1 PurQ and 2 PurS subunits.

The protein resides in the cytoplasm. It catalyses the reaction N(2)-formyl-N(1)-(5-phospho-beta-D-ribosyl)glycinamide + L-glutamine + ATP + H2O = 2-formamido-N(1)-(5-O-phospho-beta-D-ribosyl)acetamidine + L-glutamate + ADP + phosphate + H(+). It carries out the reaction L-glutamine + H2O = L-glutamate + NH4(+). The protein operates within purine metabolism; IMP biosynthesis via de novo pathway; 5-amino-1-(5-phospho-D-ribosyl)imidazole from N(2)-formyl-N(1)-(5-phospho-D-ribosyl)glycinamide: step 1/2. Its function is as follows. Part of the phosphoribosylformylglycinamidine synthase complex involved in the purines biosynthetic pathway. Catalyzes the ATP-dependent conversion of formylglycinamide ribonucleotide (FGAR) and glutamine to yield formylglycinamidine ribonucleotide (FGAM) and glutamate. The FGAM synthase complex is composed of three subunits. PurQ produces an ammonia molecule by converting glutamine to glutamate. PurL transfers the ammonia molecule to FGAR to form FGAM in an ATP-dependent manner. PurS interacts with PurQ and PurL and is thought to assist in the transfer of the ammonia molecule from PurQ to PurL. This chain is Phosphoribosylformylglycinamidine synthase subunit PurQ, found in Thermotoga maritima (strain ATCC 43589 / DSM 3109 / JCM 10099 / NBRC 100826 / MSB8).